Reading from the N-terminus, the 462-residue chain is uncharacterized protein (462 aa).

WD repeat units follow at residues 170 to 209 (GGER…EVQL), 212 to 260 (GHTD…PLLR), 263 to 302 (GHLA…ELLM), 305 to 344 (GHSE…SIMV), 347 to 386 (EHIR…LAHT), 389 to 430 (AHSS…LIKS), and 433 to 462 (GHEE…LWYP).

Its subcellular location is the cytoplasm. This is an uncharacterized protein from Schizosaccharomyces pombe (strain 972 / ATCC 24843) (Fission yeast).